The primary structure comprises 1162 residues: MKRLRSSDDLDFCNDKNVDGEPPNSDRPASSSHRGFFSGNNRDRGEDAAGFSRAFSRRRSNRDLDNHRPDARYHRSESACFSRRAFPKGFRSERERPNRDASVSSWRRFGGPGNDFGVDDRDRRLRDAERDRSLKSPSWSRDSPNELSKFKPLDSRNSRSRSKSLASPTWSKDSGSEQSKSVGNVVKKSEEEVQGKSSTTSSEMEEGELEPEPQPETASGLAHQTKHDCKLPSCSADDHKNARIDRSFQEIGKSAQLDANTESNRELSHVGGNREMETTDSMTDKKSVEDAENVPEHATESMHVSQNNVNDTSTALAIEHDHRDGTITASANKITDTVDEKGDKDEDYKENLHGVKLEETLYPDVPERLEELKEVKGNDGDANKAEVEGPECVEENALANRTPAEYISSVSDSSVHKCKDKGKNSDVPLTHLVGNALFSESKTEDLHDKDKDEKDDNFGGPSIRGFELFSSSPVRRAKKTEQSGVNKHKDEKLLLEPLDLSLSLPDVLLPIGGQDTNQLGSPVRSGSVRSLTDTFCTNSDGFTMSMSFSGSRSFNHNPSCSLSHNIGDNEQSVHSRPIFQGIDWQALSHNDSKYNENTVYQRLMENGNGSVQPRAMKGNLISGQADEEHLRLPDGSSKAANILEKQLSFQKSVDVRSACPRTGSLENGSKFTVEKKTAKDFYSGSNSWITGLEAGGHDFVETVIRYILSDSMPVMTKRFHEMPTRNITSLKENIRQMMLNMDKNVQLGAFQDALQNRTDITLELLTKSHRAQLEILVALKSGRSDFLLLDNSISSSHLAEIFMNMRCKNLSCRVLLPVDECDCRVCSRKDGFCSACMCLVCSNFDMASNTCSWVGCDVCLHWCHTDCGIKESYIRNGINASGAPGMTEMQFHCVACNHPSEMFGFVKEVFLNFAREWKFERFCKELEYVNKIFSSSKDSRGKQLRQAADAMLASLKSKLIGLPEACNRILGFISDCDSSTPAETSAPFIYEQPKPRHERGSPSQDTAWLRSVCSDNPHNQLKRSASVADAFHRERQVEICAVEMELERGSPKEPRFEELESIVRMKQAEAEMFQGRADDARREAEGLKRIAIAKKEKIEEEYNRRMGKLSMEDAQERRRRRYEELEAMQRGQREFYEMKMRMEEEMRGLLTKMEMTKQSLAL.

4 stretches are compositionally biased toward basic and acidic residues: residues 1 to 19 (MKRL…KNVD), 61 to 77 (NRDL…HRSE), 90 to 99 (FRSERERPNR), and 118 to 134 (VDDR…DRSL). Disordered regions lie at residues 1–235 (MKRL…PSCS), 251–307 (IGKS…VSQN), 321–346 (DHRD…DKDE), and 441–485 (SKTE…QSGV). The span at 135 to 146 (KSPSWSRDSPNE) shows a compositional bias: polar residues. A compositionally biased stretch (basic and acidic residues) spans 148–157 (SKFKPLDSRN). The span at 163-182 (KSLASPTWSKDSGSEQSKSV) shows a compositional bias: polar residues. Positions 203-213 (EMEEGELEPEP) are enriched in acidic residues. 4 stretches are compositionally biased toward basic and acidic residues: residues 225–235 (TKHDCKLPSCS), 263–300 (SNRE…HATE), 336–346 (DTVDEKGDKDE), and 441–457 (SKTE…KDDN). A PHD-type zinc finger spans residues 835-899 (ACMCLVCSNF…QFHCVACNHP (65 aa)). The stretch at 1065–1161 (MKQAEAEMFQ…KMEMTKQSLA (97 aa)) forms a coiled coil.

Self-interacts. Interacts with OBE1 and OBE2. Interacts with OBE3.

It localises to the nucleus. In terms of biological role, probable transcription factor that functions redundantly with OBE3 in specification of the hypophysis and establishment of the embryonic root. Involved in the activation of ARF5/MP-dependent gene expression during embryonic root meristem initiation. Involved in shoot meristem homeostasis. In Arabidopsis thaliana (Mouse-ear cress), this protein is Protein OBERON 4.